Reading from the N-terminus, the 336-residue chain is P2Y purinoceptor 13 (336 aa).

The Extracellular segment spans residues 1-32; that stretch reads MLGTVNTTGMQGFNKSERCPRDTRMTQLLFPV. N-linked (GlcNAc...) asparagine glycosylation is found at Asn6 and Asn14. The helical transmembrane segment at 33-53 threads the bilayer; sequence LYTVVFFTGVLLNTLALWVFI. The Cytoplasmic segment spans residues 54-60; it reads HIPSNST. Residues 61–81 traverse the membrane as a helical segment; it reads FIIYLKNTLVADLIMTLMLPF. The Extracellular segment spans residues 82 to 100; sequence KILSDSRLAPWQLRGFVCT. Cys99 and Cys176 form a disulfide bridge. A helical membrane pass occupies residues 101 to 121; the sequence is FSSVVFYETMYVGIMMLGLIA. The Cytoplasmic portion of the chain corresponds to 122–144; it reads FDRFLKIVVPFRKTFVKKTAFAK. Residues 145 to 165 traverse the membrane as a helical segment; the sequence is IVSISIWLLMFLISLPNMILN. The Extracellular segment spans residues 166-193; the sequence is KEATASTVKKCASLKSPLGLLWHQVVSH. The chain crosses the membrane as a helical span at residues 194-214; it reads TCQFIFWTVFILMLLFYTVIA. Topologically, residues 215–237 are cytoplasmic; that stretch reads KKVYDSYRKFKSRDSKHKRLEAK. Residues 238–258 form a helical membrane-spanning segment; that stretch reads VFIVMAVFFVCFAPFHFVRVP. Residues 259–281 lie on the Extracellular side of the membrane; that stretch reads YTHSQTTNKTDCRLENQLFLAKE. A glycan (N-linked (GlcNAc...) asparagine) is linked at Asn266. The helical transmembrane segment at 282–302 threads the bilayer; that stretch reads STLFLATTNICMDPLIYIILC. Residues 303–336 are Cytoplasmic-facing; it reads KKFTRKVPCMRWRTKTAASSDEHHSSQTDNITLS.

It belongs to the G-protein coupled receptor 1 family. In terms of tissue distribution, highest levels in spleen, liver brain and kidney. Lower but significant level are also detected in intestine, stomach, skeletal muscle, testis, heart and lung.

Its subcellular location is the cell membrane. In terms of biological role, receptor for ADP. Coupled to G(i)-proteins. May play a role in hematopoiesis and the immune system. The polypeptide is P2Y purinoceptor 13 (P2ry13) (Rattus norvegicus (Rat)).